A 67-amino-acid polypeptide reads, in one-letter code: Prokaryotic ubiquitin-like protein Pup (67 aa).

The segment covering 1–36 has biased composition (low complexity); that stretch reads MPQQFEQPQAQQAVTQEDDALATTQAATQTESTDQA. The disordered stretch occupies residues 1-38; that stretch reads MPQQFEQPQAQQAVTQEDDALATTQAATQTESTDQADV. The segment at 23–61 is ARC ATPase binding; the sequence is TTQAATQTESTDQADVLDDILDDIESTLETNAEEYVNSF. An Isoglutamyl lysine isopeptide (Glu-Lys) (interchain with K-? in acceptor proteins) cross-link involves residue Glu67.

Belongs to the prokaryotic ubiquitin-like protein family. In terms of assembly, strongly interacts with the proteasome-associated ATPase ARC through a hydrophobic interface; the interacting region of Pup lies in its C-terminal half. There is one Pup binding site per ARC hexamer ring.

It participates in protein degradation; proteasomal Pup-dependent pathway. In terms of biological role, protein modifier that is covalently attached to lysine residues of substrate proteins, thereby targeting them for proteasomal degradation. The tagging system is termed pupylation. This chain is Prokaryotic ubiquitin-like protein Pup, found in Bifidobacterium longum subsp. infantis (strain ATCC 15697 / DSM 20088 / JCM 1222 / NCTC 11817 / S12).